The primary structure comprises 244 residues: tRNA (guanine-N(1)-)-methyltransferase (244 aa).

Residues glycine 112 and 132–137 (IGDYIL) contribute to the S-adenosyl-L-methionine site.

Belongs to the RNA methyltransferase TrmD family. As to quaternary structure, homodimer.

It localises to the cytoplasm. It catalyses the reaction guanosine(37) in tRNA + S-adenosyl-L-methionine = N(1)-methylguanosine(37) in tRNA + S-adenosyl-L-homocysteine + H(+). Its function is as follows. Specifically methylates guanosine-37 in various tRNAs. The protein is tRNA (guanine-N(1)-)-methyltransferase of Geobacillus kaustophilus (strain HTA426).